The chain runs to 517 residues: Zinc finger protein AEBP2 (517 aa).

Residues 1–229 (MAAAITDMAD…DSEDSISSTI (229 aa)) are disordered. An N-acetylalanine modification is found at Ala2. Ser18 and Ser24 each carry phosphoserine. Residues 36–51 (PEEEEEEEEEEEEAEA) show a composition bias toward acidic residues. Positions 61–78 (GGSGGGGGGGGGGVGGGE) are enriched in gly residues. The span at 94–121 (GEDEDEEEDDEEEEDESSSSGGGEEESS) shows a compositional bias: acidic residues. Residues 122–150 (AESLVGSSGGSSSDETRSLSPGAASSSSG) show a composition bias toward low complexity. Ser141 bears the Phosphoserine mark. The segment covering 152–163 (GDGKEGLEEPKG) has biased composition (basic and acidic residues). 2 stretches are compositionally biased toward gly residues: residues 166 to 175 (GSQGGGGGGS) and 185 to 196 (GDEGYGTGGGGS). Residues Ser206, Ser210, and Ser211 each carry the phosphoserine modification. Positions 209–294 (MSSDGEPLSR…IHVDGQRGGV (86 aa)) are interaction with RBBP4. The C2H2-type 1 zinc-finger motif lies at 261 to 286 (YNCCWDQCQACFNSSPDLADHIRSIH). A C2H2-type 2; degenerate zinc finger spans residues 300–322 (KGCKVYNTPSTSQSWLQRHMLTH). Residues 328–352 (FKCVVGGCNASFASQGGLARHVPTH) form a C2H2-type 3 zinc finger. Positions 352–365 (HFSQQNSSKVSSQP) are enriched in polar residues. The tract at residues 352-394 (HFSQQNSSKVSSQPKAKEESPSKAGMNKRRKLKNKRRRSLPRP) is disordered. Positions 377–392 (MNKRRKLKNKRRRSLP) are enriched in basic residues. The residue at position 390 (Ser390) is a Phosphoserine. Residues 407 to 478 (RHRAICFNLS…QLKTKVVHLS (72 aa)) are interaction with SUZ12. Positions 495-517 (TMPQKRLKRTLIRKVFNLYLSKQ) are important for nucleosome binding activity of the PRC2 complex.

This sequence belongs to the AEBP2/jing C2H2-type zinc-finger family. Self-associates. Associates with the PRC2 complex, which consists of the core components EED, EZH1 or EZH2, SUZ12, and RBBP4, and various combinations of accessory subunits including AEBP2, JARID2, PHF19, MTF2 and EPOP. Found in a monomeric PRC2.2 (class 2) complex consisting of at least SUZ12, RBBP4, AEBP2 and JARID2. Within the PRC2 complex, interacts directly with SUZ12; competes with PHF19 for SUZ12 binding. Interacts with EED, EZH2, and RBBP4. May also interact with RBBP7.

The protein localises to the nucleus. Its function is as follows. Acts as an accessory subunit for the core Polycomb repressive complex 2 (PRC2), which mediates histone H3K27 (H3K27me3) trimethylation on chromatin leading to transcriptional repression of the affected target gene. Plays a role in nucleosome localization of the PRC2 complex. This is Zinc finger protein AEBP2 (AEBP2) from Homo sapiens (Human).